A 309-amino-acid chain; its full sequence is MRKKISIIGAGFVGSTTAHWLAAKELGDIVLLDIVEGIPQGKALDLYEASPIEDFDVRVIGTNDYADTANSDVIVVTSGAPRKPGMSREDLIKVNADITRDCISKAAPLSPNAVIIMVNNPLDAMTYLAAEVSGFPKERVMGQAGVLDAARYRTFIAMEAGVSVEDVQAMLMGGHGDEMVPLPRFSTISGIPVSHFIAPDRLAQIIERTRKGGGEIVNLLKTGSAYYAPAAATAQMVEAVLKDKKRVVPVAAYLTGQYGLHDMYFGVPVVLGAGGVEKIIELPLNEEEMALLNASAKAVRATLDTLKSL.

NAD(+)-binding positions include 9 to 14 (GAGFVG) and Asp-33. 2 residues coordinate substrate: Arg-82 and Arg-88. Residues Asn-95 and 118 to 120 (VNN) contribute to the NAD(+) site. Substrate is bound by residues Asn-120 and Arg-151. The Proton acceptor role is filled by His-175.

This sequence belongs to the LDH/MDH superfamily. MDH type 3 family.

It catalyses the reaction (S)-malate + NAD(+) = oxaloacetate + NADH + H(+). Catalyzes the reversible oxidation of malate to oxaloacetate. The polypeptide is Malate dehydrogenase (Chloroflexus aggregans (strain MD-66 / DSM 9485)).